The primary structure comprises 75 residues: Small ribosomal subunit protein bS18 (75 aa).

Belongs to the bacterial ribosomal protein bS18 family. In terms of assembly, part of the 30S ribosomal subunit. Forms a tight heterodimer with protein bS6.

Its function is as follows. Binds as a heterodimer with protein bS6 to the central domain of the 16S rRNA, where it helps stabilize the platform of the 30S subunit. The protein is Small ribosomal subunit protein bS18 of Thermotoga maritima (strain ATCC 43589 / DSM 3109 / JCM 10099 / NBRC 100826 / MSB8).